Consider the following 104-residue polypeptide: Inner membrane protein YjeO (104 aa).

The Cytoplasmic segment spans residues 1–5 (MSARM). A helical membrane pass occupies residues 6 to 26 (FVLCCIWFIVAFLWITITSAL). At 27-52 (DKEWMIDGRGINNVCDVLMYLEEDDT) the chain is on the periplasmic side. The chain crosses the membrane as a helical span at residues 53 to 73 (RDVGVIMTLPLFFPFLWFALW). At 74 to 77 (RKKR) the chain is on the cytoplasmic side. A helical membrane pass occupies residues 78 to 98 (GWFMYATALAIFGYWLWQFFL). Over 99-104 (RYQFCL) the chain is Periplasmic.

Its subcellular location is the cell inner membrane. This is Inner membrane protein YjeO (yjeO) from Escherichia coli (strain K12).